We begin with the raw amino-acid sequence, 620 residues long: Mitochondrial Rho GTPase 2 (620 aa).

Over 1-594 the chain is Cytoplasmic; the sequence is MKRDVRILLL…ELHTTSFWLR (594 aa). In terms of domain architecture, Miro 1 spans 2–168; that stretch reads KRDVRILLLG…FYYAQKAVLH (167 aa). GTP contacts are provided by G16, K17, T18, and S19. Mg(2+) is bound at residue T18. Positions 35 and 57 each coordinate Mg(2+). S59 is a GTP binding site. K96 participates in a covalent cross-link: Glycyl lysine isopeptide (Lys-Gly) (interchain with G-Cter in ubiquitin). Residues N118, K119, D121, A149, and K150 each coordinate GTP. A Glycyl lysine isopeptide (Lys-Gly) (interchain with G-Cter in ubiquitin) cross-link involves residue K119. A Glycyl lysine isopeptide (Lys-Gly) (interchain with G-Cter in ubiquitin) cross-link involves residue K164. EF-hand domains lie at 184–219 and 304–339; these read ACAQ…CFGH and HGYQ…FPGP. Residues D197, D199, D201, E208, D317, D319, D321, and E328 each contribute to the Ca(2+) site. Positions 340 to 364 are disordered; that stretch reads PWGPQLPRHRPHRGRSAAPARVPLP. The Miro 2 domain occupies 415–578; it reads RNVLLCKVLG…FARLATMATF (164 aa). The GTP site is built by G427, G429, K430, and S431. The Mg(2+) site is built by S431 and E473. 3 residues coordinate GTP: K527, D529, and C558. The helical; Anchor for type IV membrane protein transmembrane segment at 595–617 threads the bilayer; sequence VALGAVGAAVAAILSFSLYRVLV. Residues 618–620 are Mitochondrial intermembrane-facing; that stretch reads KSR.

Belongs to the mitochondrial Rho GTPase family. Homodimer. Interacts with the kinesin-binding proteins TRAK1/OIP106 and TRAK2/GRIF1, forming a link between mitochondria and the trafficking apparatus of the microtubules. Interacts with ARMCX3. Found in a complex with KIF5B, OGT, RHOT1 and TRAK1. Ubiquitinated by PRKN in a PINK1-dependent manner, leading to its degradation.

It localises to the mitochondrion outer membrane. It carries out the reaction GTP + H2O = GDP + phosphate + H(+). The enzyme catalyses ATP + H2O = ADP + phosphate + H(+). It catalyses the reaction UTP + H2O = UDP + phosphate + H(+). Its function is as follows. Atypical mitochondrial nucleoside-triphosphatase (NTPase) involved in mitochondrial trafficking. Probably involved in control of anterograde transport of mitochondria and their subcellular distribution. Can hydrolyze GTP, ATP and UTP. This Sus scrofa (Pig) protein is Mitochondrial Rho GTPase 2 (RHOT2).